The primary structure comprises 136 residues: Phosphoribosyl-AMP cyclohydrolase (136 aa).

D92 serves as a coordination point for Mg(2+). Residue C93 coordinates Zn(2+). Mg(2+)-binding residues include D94 and D96. Residues C109 and C116 each coordinate Zn(2+).

It belongs to the PRA-CH family. As to quaternary structure, homodimer. Mg(2+) is required as a cofactor. The cofactor is Zn(2+).

The protein localises to the cytoplasm. It carries out the reaction 1-(5-phospho-beta-D-ribosyl)-5'-AMP + H2O = 1-(5-phospho-beta-D-ribosyl)-5-[(5-phospho-beta-D-ribosylamino)methylideneamino]imidazole-4-carboxamide. It functions in the pathway amino-acid biosynthesis; L-histidine biosynthesis; L-histidine from 5-phospho-alpha-D-ribose 1-diphosphate: step 3/9. Its activity is regulated as follows. Reversibly inhibited by EDTA and free zinc ions. Enzyme is inactivated by dialysis against 1,10-phenanthroline, which is a zinc specific chelator. Functionally, catalyzes the hydrolysis of the adenine ring of phosphoribosyl-AMP. This is Phosphoribosyl-AMP cyclohydrolase from Methanococcus vannielii.